The sequence spans 120 residues: Large ribosomal subunit protein uL18 (120 aa).

This sequence belongs to the universal ribosomal protein uL18 family. As to quaternary structure, part of the 50S ribosomal subunit; part of the 5S rRNA/L5/L18/L25 subcomplex. Contacts the 5S and 23S rRNAs.

Its function is as follows. This is one of the proteins that bind and probably mediate the attachment of the 5S RNA into the large ribosomal subunit, where it forms part of the central protuberance. This chain is Large ribosomal subunit protein uL18, found in Rhodospirillum rubrum (strain ATCC 11170 / ATH 1.1.1 / DSM 467 / LMG 4362 / NCIMB 8255 / S1).